The following is a 201-amino-acid chain: Extracellular superoxide dismutase [Cu-Zn] (201 aa).

The signal sequence occupies residues 1–42 (MINSFIVIFLSFLIFINYANLVCVEATHVYGRRSHSNGMHGN). His89, His91, and His106 together coordinate Cu cation. The cysteines at positions 100 and 192 are disulfide-linked. His106, His114, His123, and Asp126 together coordinate Zn(2+). Cu cation is bound at residue His163.

This sequence belongs to the Cu-Zn superoxide dismutase family. In terms of assembly, homodimer. The cofactor is Cu cation. It depends on Zn(2+) as a cofactor.

It localises to the secreted. The protein resides in the extracellular space. The enzyme catalyses 2 superoxide + 2 H(+) = H2O2 + O2. Functionally, destroys radicals which are normally produced within the cells and which are toxic to biological systems. May act in the parasite defense against phagocyte-generated reactive oxygen species. The protein is Extracellular superoxide dismutase [Cu-Zn] (sod-4) of Onchocerca volvulus.